The following is a 303-amino-acid chain: WD repeat-containing protein 38 (303 aa).

WD repeat units lie at residues 24–63 (QHHGEVNCSAFSPDGRTLLTASDDGCVYVWGTKSGRLLWR), 66–105 (GHRGPVKSCCFSPDGRLIASSSSDHSIRLWDVARSKCLHV), 108–147 (GHQRSVETVSFSPDSKQLASGGWDKRAIVWEVQSGRRVHL), 150–189 (GHCDSIQSSDFSPTSDSLATGSWDSTVHIWDLRASTPVVS), 195–233 (GHTGNISCLCYSASGLLASGSWDKTICVWKPTTNNLPLQ), 236–277 (GHTI…ETLK), and 279–303 (MLDVAHACIFTPDGKLLVSGAAVTR).

This chain is WD repeat-containing protein 38 (Wdr38), found in Mus musculus (Mouse).